We begin with the raw amino-acid sequence, 315 residues long: tRNA dimethylallyltransferase (315 aa).

Residue 13-20 coordinates ATP; that stretch reads GPTAVGKT. Substrate is bound at residue 15-20; the sequence is TAVGKT. Residues 38–41 form an interaction with substrate tRNA region; it reads DSRL.

It belongs to the IPP transferase family. As to quaternary structure, monomer. Mg(2+) serves as cofactor.

The enzyme catalyses adenosine(37) in tRNA + dimethylallyl diphosphate = N(6)-dimethylallyladenosine(37) in tRNA + diphosphate. Catalyzes the transfer of a dimethylallyl group onto the adenine at position 37 in tRNAs that read codons beginning with uridine, leading to the formation of N6-(dimethylallyl)adenosine (i(6)A). The sequence is that of tRNA dimethylallyltransferase from Herpetosiphon aurantiacus (strain ATCC 23779 / DSM 785 / 114-95).